A 249-amino-acid polypeptide reads, in one-letter code: UPF0246 protein EUBREC_1226 (249 aa).

Belongs to the UPF0246 family.

The polypeptide is UPF0246 protein EUBREC_1226 (Agathobacter rectalis (strain ATCC 33656 / DSM 3377 / JCM 17463 / KCTC 5835 / VPI 0990) (Eubacterium rectale)).